Here is a 271-residue protein sequence, read N- to C-terminus: Formamidopyrimidine-DNA glycosylase (271 aa).

The Schiff-base intermediate with DNA role is filled by proline 2. Glutamate 3 (proton donor) is an active-site residue. The active-site Proton donor; for beta-elimination activity is lysine 56. Residues histidine 89, arginine 107, and arginine 151 each coordinate DNA. The FPG-type zinc finger occupies 236–270 (MVYARQGQPCRVCATPIKSLRQGQRSTFYCPHCQK). Catalysis depends on arginine 260, which acts as the Proton donor; for delta-elimination activity.

It belongs to the FPG family. Monomer. The cofactor is Zn(2+).

The enzyme catalyses Hydrolysis of DNA containing ring-opened 7-methylguanine residues, releasing 2,6-diamino-4-hydroxy-5-(N-methyl)formamidopyrimidine.. The catalysed reaction is 2'-deoxyribonucleotide-(2'-deoxyribose 5'-phosphate)-2'-deoxyribonucleotide-DNA = a 3'-end 2'-deoxyribonucleotide-(2,3-dehydro-2,3-deoxyribose 5'-phosphate)-DNA + a 5'-end 5'-phospho-2'-deoxyribonucleoside-DNA + H(+). Its function is as follows. Involved in base excision repair of DNA damaged by oxidation or by mutagenic agents. Acts as a DNA glycosylase that recognizes and removes damaged bases. Has a preference for oxidized purines, such as 7,8-dihydro-8-oxoguanine (8-oxoG). Has AP (apurinic/apyrimidinic) lyase activity and introduces nicks in the DNA strand. Cleaves the DNA backbone by beta-delta elimination to generate a single-strand break at the site of the removed base with both 3'- and 5'-phosphates. This chain is Formamidopyrimidine-DNA glycosylase, found in Albidiferax ferrireducens (strain ATCC BAA-621 / DSM 15236 / T118) (Rhodoferax ferrireducens).